Reading from the N-terminus, the 416-residue chain is PTS system N-acetylglucosamine-specific EIIC component (416 aa).

The 391-residue stretch at 16–406 (SGLFQGLQKV…FNLKTPGREP (391 aa)) folds into the PTS EIIC type-1 domain. A run of 10 helical transmembrane segments spans residues 68–88 (AGGALTGSLPILFCIGVAIGF), 96–116 (TALAAVVGFLVYSKVLEAFPV), 130–150 (TYNDPGVLGGIIMGLLAAVLW), 170–190 (LVPIIMAFVGIVVGVFFGLVW), 196–216 (GISNFGEWMTGLGSGGAALFG), 266–286 (IFQAGFFPIMMFGLPAAALAM), 298–318 (VLGMMISLAATSFVTGVTEPI), 323–343 (MFIAPVLYVLHAVLTAISMAI), 344–364 (TWGLGVHAGFNFSAGFIDYAL), and 375–395 (IIPIGLVFAAIYYVTFRFAIV).

It localises to the cell membrane. In terms of biological role, the phosphoenolpyruvate-dependent sugar phosphotransferase system (sugar PTS), a major carbohydrate active transport system, catalyzes the phosphorylation of incoming sugar substrates concomitantly with their translocation across the cell membrane. This system is involved in N-acetylglucosamine (GlcNAc) transport. High-affinity permease, which exhibits a narrow specificity for GlcNAc. Essential for C-signaling between vegetative growth and development. In Streptomyces coelicolor (strain ATCC BAA-471 / A3(2) / M145), this protein is PTS system N-acetylglucosamine-specific EIIC component.